Consider the following 333-residue polypeptide: Ketol-acid reductoisomerase (NADP(+)) (333 aa).

The KARI N-terminal Rossmann domain maps to 1-181; it reads MKVYYDQDAD…GGARSGVIET (181 aa). NADP(+)-binding positions include 24–27, Arg-47, and 82–85; these read YGSQ and DEVQ. His-107 is a catalytic residue. An NADP(+)-binding site is contributed by Gly-133. The KARI C-terminal knotted domain occupies 182–327; sequence TFREETETDL…KELRSMMPWL (146 aa). Mg(2+)-binding residues include Asp-190, Glu-194, Glu-226, and Glu-230. Ser-251 serves as a coordination point for substrate.

Belongs to the ketol-acid reductoisomerase family. Mg(2+) is required as a cofactor.

The catalysed reaction is (2R)-2,3-dihydroxy-3-methylbutanoate + NADP(+) = (2S)-2-acetolactate + NADPH + H(+). The enzyme catalyses (2R,3R)-2,3-dihydroxy-3-methylpentanoate + NADP(+) = (S)-2-ethyl-2-hydroxy-3-oxobutanoate + NADPH + H(+). The protein operates within amino-acid biosynthesis; L-isoleucine biosynthesis; L-isoleucine from 2-oxobutanoate: step 2/4. It functions in the pathway amino-acid biosynthesis; L-valine biosynthesis; L-valine from pyruvate: step 2/4. Functionally, involved in the biosynthesis of branched-chain amino acids (BCAA). Catalyzes an alkyl-migration followed by a ketol-acid reduction of (S)-2-acetolactate (S2AL) to yield (R)-2,3-dihydroxy-isovalerate. In the isomerase reaction, S2AL is rearranged via a Mg-dependent methyl migration to produce 3-hydroxy-3-methyl-2-ketobutyrate (HMKB). In the reductase reaction, this 2-ketoacid undergoes a metal-dependent reduction by NADPH to yield (R)-2,3-dihydroxy-isovalerate. The protein is Ketol-acid reductoisomerase (NADP(+)) of Desulfovibrio desulfuricans (strain ATCC 27774 / DSM 6949 / MB).